A 447-amino-acid chain; its full sequence is Cysteine--tRNA ligase (447 aa).

Cys28 lines the Zn(2+) pocket. The 'HIGH' region motif lies at 30 to 40 (PTVYNYIHIGN). Residues Cys211, His236, and Glu240 each contribute to the Zn(2+) site. Positions 268-272 (KMSKS) match the 'KMSKS' region motif. Lys271 provides a ligand contact to ATP.

The protein belongs to the class-I aminoacyl-tRNA synthetase family. Monomer. Requires Zn(2+) as cofactor.

The protein localises to the cytoplasm. The catalysed reaction is tRNA(Cys) + L-cysteine + ATP = L-cysteinyl-tRNA(Cys) + AMP + diphosphate. The polypeptide is Cysteine--tRNA ligase (Streptococcus pyogenes serotype M3 (strain ATCC BAA-595 / MGAS315)).